A 181-amino-acid chain; its full sequence is Mating-type protein A1 (181 aa).

The homeobox DNA-binding region spans 122–181 (DKKKRRHIPESSKELLEKAFKVKRFPNSKERERIARECGISPLQVRVWFTNKRARSKSRA).

The protein belongs to the MATA1 family.

The protein resides in the nucleus. In terms of biological role, mating type proteins are sequence specific DNA-binding proteins that act as master switches in yeast differentiation by controlling gene expression in a cell type-specific fashion. The protein is Mating-type protein A1 (MATA1) of Pichia angusta (Yeast).